The chain runs to 201 residues: ATP-dependent Clp protease proteolytic subunit (201 aa).

Serine 101 (nucleophile) is an active-site residue. Histidine 126 is a catalytic residue.

The protein belongs to the peptidase S14 family. In terms of assembly, fourteen ClpP subunits assemble into 2 heptameric rings which stack back to back to give a disk-like structure with a central cavity, resembling the structure of eukaryotic proteasomes.

The protein localises to the cytoplasm. The enzyme catalyses Hydrolysis of proteins to small peptides in the presence of ATP and magnesium. alpha-casein is the usual test substrate. In the absence of ATP, only oligopeptides shorter than five residues are hydrolyzed (such as succinyl-Leu-Tyr-|-NHMec, and Leu-Tyr-Leu-|-Tyr-Trp, in which cleavage of the -Tyr-|-Leu- and -Tyr-|-Trp bonds also occurs).. Functionally, cleaves peptides in various proteins in a process that requires ATP hydrolysis. Has a chymotrypsin-like activity. Plays a major role in the degradation of misfolded proteins. The chain is ATP-dependent Clp protease proteolytic subunit from Francisella philomiragia subsp. philomiragia (strain ATCC 25017 / CCUG 19701 / FSC 153 / O#319-036).